A 454-amino-acid polypeptide reads, in one-letter code: tRNA modification GTPase MnmE (454 aa).

(6S)-5-formyl-5,6,7,8-tetrahydrofolate is bound by residues Arg-23, Glu-80, and Lys-120. Positions 216–377 (GMKVVIAGRP…LRNHLKQSMG (162 aa)) constitute a TrmE-type G domain. Residue Asn-226 participates in K(+) binding. GTP is bound by residues 226 to 231 (NAGKSS), 245 to 251 (TDIAGTT), 270 to 273 (DTAG), 335 to 338 (NKAD), and 358 to 360 (SAR). Mg(2+) is bound at residue Ser-230. 3 residues coordinate K(+): Thr-245, Ile-247, and Thr-250. Thr-251 is a binding site for Mg(2+). (6S)-5-formyl-5,6,7,8-tetrahydrofolate is bound at residue Lys-454.

Belongs to the TRAFAC class TrmE-Era-EngA-EngB-Septin-like GTPase superfamily. TrmE GTPase family. Homodimer. Heterotetramer of two MnmE and two MnmG subunits. It depends on K(+) as a cofactor.

It is found in the cytoplasm. Its function is as follows. Exhibits a very high intrinsic GTPase hydrolysis rate. Involved in the addition of a carboxymethylaminomethyl (cmnm) group at the wobble position (U34) of certain tRNAs, forming tRNA-cmnm(5)s(2)U34. The polypeptide is tRNA modification GTPase MnmE (Enterobacter sp. (strain 638)).